We begin with the raw amino-acid sequence, 473 residues long: Ribulose bisphosphate carboxylase large chain (473 aa).

Residues 1 to 2 (MS) constitute a propeptide that is removed on maturation. Pro-3 carries the N-acetylproline modification. An N6,N6,N6-trimethyllysine modification is found at Lys-14. Residues Asn-123 and Thr-173 each contribute to the substrate site. Residue Lys-175 is the Proton acceptor of the active site. Lys-177 serves as a coordination point for substrate. Mg(2+)-binding residues include Lys-201, Asp-203, and Glu-204. Lys-201 bears the N6-carboxylysine mark. His-294 functions as the Proton acceptor in the catalytic mechanism. Positions 295, 327, and 379 each coordinate substrate.

This sequence belongs to the RuBisCO large chain family. Type I subfamily. As to quaternary structure, heterohexadecamer of 8 large chains and 8 small chains; disulfide-linked. The disulfide link is formed within the large subunit homodimers. Requires Mg(2+) as cofactor. The disulfide bond which can form in the large chain dimeric partners within the hexadecamer appears to be associated with oxidative stress and protein turnover.

The protein localises to the plastid. It is found in the chloroplast. The catalysed reaction is 2 (2R)-3-phosphoglycerate + 2 H(+) = D-ribulose 1,5-bisphosphate + CO2 + H2O. The enzyme catalyses D-ribulose 1,5-bisphosphate + O2 = 2-phosphoglycolate + (2R)-3-phosphoglycerate + 2 H(+). RuBisCO catalyzes two reactions: the carboxylation of D-ribulose 1,5-bisphosphate, the primary event in carbon dioxide fixation, as well as the oxidative fragmentation of the pentose substrate in the photorespiration process. Both reactions occur simultaneously and in competition at the same active site. The polypeptide is Ribulose bisphosphate carboxylase large chain (Cajanus cajan (Pigeon pea)).